A 235-amino-acid polypeptide reads, in one-letter code: Small ribosomal subunit protein uS3 (235 aa).

The KH type-2 domain maps to 39-107 (VRKFLLGQLS…PTKLNISEIR (69 aa)).

This sequence belongs to the universal ribosomal protein uS3 family. In terms of assembly, part of the 30S ribosomal subunit. Forms a tight complex with proteins S10 and S14.

In terms of biological role, binds the lower part of the 30S subunit head. Binds mRNA in the 70S ribosome, positioning it for translation. The sequence is that of Small ribosomal subunit protein uS3 from Blochmanniella floridana.